The primary structure comprises 239 residues: Serine protease SplC (239 aa).

A signal peptide spans 1-36; sequence MNKNIVIKSMAALAILTSVTGINAAVVEETQQIANA. Residues histidine 75, aspartate 113, and serine 193 each act as charge relay system in the active site.

It belongs to the peptidase S1B family.

It localises to the secreted. The protein is Serine protease SplC (splC) of Staphylococcus aureus (strain USA300 / TCH1516).